The following is a 101-amino-acid chain: MHLLKGGVVLIITLILFLITSSIVAIREDPSLIGVDRQIPTGPDPLHNPPQPSPKHHHWIGVEENNIDRSWNYVDYESHHAHSPIHNSPEPAPLYRHLIGV.

The signal sequence occupies residues 1–25; that stretch reads MHLLKGGVVLIITLILFLITSSIVA. A disordered region spans residues 37–58; sequence RQIPTGPDPLHNPPQPSPKHHH. Hydroxyproline occurs at positions 40 and 43. The segment covering 42–53 has biased composition (pro residues); that stretch reads GPDPLHNPPQPS. The O-linked (Ara...) hydroxyproline glycan is linked to Pro-43. The residue at position 76 (Tyr-76) is a Sulfotyrosine. Pro-84 carries the post-translational modification Hydroxyproline.

It belongs to the CLV3/ESR signal peptide family. In terms of processing, the tyrosine sulfation is critical for the function of the peptide. Post-translationally, the O-glycosylation (arabinosylation) of the hydroxyproline Pro-43 enhances binding affinity of the CLE18p peptide for its receptor. Expressed in roots, leaves, siliques and seedlings.

The protein resides in the secreted. Its subcellular location is the extracellular space. Root growth factor that regulates the pattern of root growth and lateral root development by modulating the length and the number of cortical cells in the root apical meristem (RAM), and the anticlinal asymmetric cell divisions in lateral root initiation cells. Functionally, extracellular signal peptide that regulates cell fate. Represses root apical meristem maintenance. Root growth factor that regulates the pattern of root growth and lateral root development. Regulates the transition of protophloem cells from proliferation to differentiation, thus impinging on postembryonic growth capacity of the root meristem; this signaling pathway requires CRN and CLV2. The sequence is that of CLAVATA3/ESR (CLE)-related protein 18 from Arabidopsis thaliana (Mouse-ear cress).